We begin with the raw amino-acid sequence, 323 residues long: Ribokinase (323 aa).

Substrate-binding positions include 26–28 (MTD), 54–58 (GKGAN), and Glu155. ATP is bound by residues Asn200, 236–241 (TLGASG), and Thr257. Residues Asp264 and Thr266 each contribute to the K(+) site. Residues 269-270 (GD) and Asn296 contribute to the ATP site. Asp270 is a binding site for substrate. Residue Asp270 is the Proton acceptor of the active site. Positions 302, 305, 307, and 311 each coordinate K(+).

The protein belongs to the carbohydrate kinase PfkB family. Ribokinase subfamily. Homodimer. Mg(2+) serves as cofactor.

The protein resides in the cytoplasm. It localises to the nucleus. The catalysed reaction is D-ribose + ATP = D-ribose 5-phosphate + ADP + H(+). The protein operates within carbohydrate metabolism; D-ribose degradation; D-ribose 5-phosphate from beta-D-ribopyranose: step 2/2. With respect to regulation, activated by a monovalent cation that binds near, but not in, the active site. The most likely occupant of the site in vivo is potassium. Ion binding induces a conformational change that may alter substrate affinity. Competitively inhibited by phosphonoacetic acid, etidronate, 2-carboxethylphosphonic acid, N-(phosphonomethyl)glycine, N-(phosphonomethyl)iminodiacetic acid and clodronate. Functionally, catalyzes the phosphorylation of ribose at O-5 in a reaction requiring ATP and magnesium. The resulting D-ribose-5-phosphate can then be used either for sythesis of nucleotides, histidine, and tryptophan, or as a component of the pentose phosphate pathway. This chain is Ribokinase, found in Mus musculus (Mouse).